A 2449-amino-acid polypeptide reads, in one-letter code: Nonribisomal peptide synthetase phqB (2449 aa).

The segment at 253 to 654 (IQVHSGPGRL…GRRDTVVKIR (402 aa)) is adenylation 1. The Carrier 1 domain maps to 795–870 (LPMTPNEDVL…LRTVAKEARP (76 aa)). S815 carries the O-(pantetheine 4'-phosphoryl)serine modification. The tract at residues 913–1337 (QDIYPTTPLQ…LISDRDSELL (425 aa)) is condensation 1. The segment at 1357–1756 (EAQVTRNPSK…TFTFLGRTNQ (400 aa)) is adenylation 2. One can recognise a Carrier 2 domain in the interval 1915–1993 (WALSKHIGQL…MVAEMIDRTP (79 aa)). At S1952 the chain carries O-(pantetheine 4'-phosphoryl)serine. A reductase (R) domain region spans residues 2041–2297 (LTGATGFLGT…VAAVDWVASL (257 aa)). 3 residues coordinate NADPH: T2045, M2249, and N2259.

The protein belongs to the NRP synthetase family.

The protein operates within alkaloid biosynthesis. Nonribisomal peptide synthetase; part of the gene cluster that mediates the biosynthesis of paraherquamide, a fungal indole alkaloid that belongs to a family of natural products containing a characteristic bicyclo[2.2.2]diazaoctane core. The first steps in the biosynthesis of paraherquamide is the production of the beta-methyl-proline precursor from L-isoleucine. They require oxidation of a terminally hydroxylated L-isoleucine to the corresponding aldehyde by enzymes which have still to be identified. Spontaneous cyclization and dehydration would yield the 4-methyl pyrolline-5-carboxylic acid, which is then reduced by the pyrroline-5-carboxylate reductase phqD leading to the beta-methyl-proline precursor. The next step of paraherquamide biosynthesis involves coupling of beta-methyl-proline and L-tryptophan by the bimodular NRPS phqB, to produce a monooxopiperazine intermediate. The reductase (R) domain of phqB utilizes NADPH for hydride transfer to reduce the thioester bond of the T domain-tethered linear dipeptide to a hemithioaminal intermediate, which spontaneously cleaves the C-S bond to release the aldehyde product. This compound undergoes spontaneous cyclization and dehydration to give a dienamine which is reverse prenylated at C-2 by the reverse prenyltransferase phqJ. The other prenyltransferase present in the cluster, phqI may be a redundant gene in the pathway. During biosynthetic assembly, the key step to produce the polycyclic core is catalyzed by the bifunctional reductase and intramolecular [4+2] Diels-Alderase, phqE, resulting in formation of the [2.2.2] diazaoctane intermediate preparaherquamide. Following formation of preparaherquamide, an indole 2,3-epoxidation-initiated pinacol-like rearrangement is catalyzed by the phqK FAD-dependent monooxygenase. The prenyltransferase phqA, the cytochrome P450 monooxygenase phqL, and the FAD-linked oxidoreductase phqH (or the cytochrome P450 monooxygenase phqM), are proposed to be involved in the formation of the pyran ring. The FAD-dependent monooxygenase phqK is likely responsible for generation of the spiro-oxindole, and the N-methylation is likely mediated by the phqN methyltransferase leading to the isolable natural product paraherquamide F. However, the order of these biosynthetic steps has still to be determined. In late-stage paraherquamide biosynthesis, the third P450 monooxygenase, phqO, is probably responsible for the C-14 hydroxylation, transforming paraherquamide F to paraherquamide G, and paraherquamide E to the final product paraherquamide A. The expansion from the 6-membered ring pyran (in paraherquamides F and G) to the 7-membered dioxepin ring (in paraherquamides A and E) represents a poorly understood but intriguing process that probably involves the 2-oxoglutarate-dependent dioxygenase phqC. Finally, the remaining members of the paraherquamide cluster, including phqI as well as phqM (or phqH), do not have a clearly prescribed role and appear to be redundant. This chain is Nonribisomal peptide synthetase phqB, found in Penicillium fellutanum.